An 899-amino-acid polypeptide reads, in one-letter code: Suppressor of glycerol defect protein 1 (899 aa).

A compositionally biased stretch (basic and acidic residues) spans 24 to 33 (QDERFSISEG). 2 disordered regions span residues 24–181 (QDER…VSYP) and 248–326 (ETNS…DDSE). The span at 34 to 49 (KKRRRGNGKHLSRKEK) shows a compositional bias: basic residues. Residues 65 to 77 (REINSSRLKSAPT) are compositionally biased toward polar residues. Residues 103–126 (DESESNENWDSDEVLTDEVAEESG) show a composition bias toward acidic residues. 3 stretches are compositionally biased toward basic and acidic residues: residues 134–143 (ETMKKLESLK), 162–174 (SYEK…RDTN), and 251–264 (SMRK…KAFS). Residues 265–292 (SDDDLSASDFEDSDGLSESDNDSVADSD) show a composition bias toward acidic residues. An MIF4G domain is found at 335-540 (SKKVNSSLNK…DTMSDLKNNR (206 aa)). The MI domain maps to 644 to 781 (DIRRAIFISI…KLDVFKHVPF (138 aa)). The residue at position 736 (Ser-736) is a Phosphoserine.

The protein belongs to the CWC22 family. As to quaternary structure, interacts with PLC1.

Its subcellular location is the nucleus. The protein localises to the nucleolus. Its function is as follows. Involved in osmoregulatory glycerol response, probably through its interaction with PLC1 which regulates the expression of GDP1. This chain is Suppressor of glycerol defect protein 1 (SGD1), found in Saccharomyces cerevisiae (strain ATCC 204508 / S288c) (Baker's yeast).